The primary structure comprises 347 residues: Ubiquinone biosynthesis protein coq-4, mitochondrial (347 aa).

The N-terminal 49 residues, 1-49 (MEVTALRRSAALVARASSQNAIRPAVCAAISSTSPTPPTQIQTQQTRQF), are a transit peptide targeting the mitochondrion. H185, D186, H189, and E201 together coordinate Zn(2+). The tract at residues 284–310 (IRKREREEKRRRKEMERMLSGRGTEDV) is disordered.

It belongs to the COQ4 family. As to quaternary structure, component of a multi-subunit COQ enzyme complex, composed of at least coq-3, coq-4, coq-5, coq-6, coq-7 and coq-9. Requires Zn(2+) as cofactor.

Its subcellular location is the mitochondrion inner membrane. The catalysed reaction is a 4-hydroxy-3-methoxy-5-(all-trans-polyprenyl)benzoate + H(+) = a 2-methoxy-6-(all-trans-polyprenyl)phenol + CO2. It functions in the pathway cofactor biosynthesis; ubiquinone biosynthesis. Lyase that catalyzes the C1-decarboxylation of 4-hydroxy-3-methoxy-5-(all-trans-polyprenyl)benzoic acid into 2-methoxy-6-(all-trans-polyprenyl)phenol during ubiquinone biosynthesis. The protein is Ubiquinone biosynthesis protein coq-4, mitochondrial of Neurospora crassa (strain ATCC 24698 / 74-OR23-1A / CBS 708.71 / DSM 1257 / FGSC 987).